A 137-amino-acid polypeptide reads, in one-letter code: ATP synthase epsilon chain, chloroplastic (137 aa).

The protein belongs to the ATPase epsilon chain family. In terms of assembly, F-type ATPases have 2 components, CF(1) - the catalytic core - and CF(0) - the membrane proton channel. CF(1) has five subunits: alpha(3), beta(3), gamma(1), delta(1), epsilon(1). CF(0) has three main subunits: a, b and c.

It localises to the plastid. The protein resides in the chloroplast thylakoid membrane. Produces ATP from ADP in the presence of a proton gradient across the membrane. This Agrostis stolonifera (Creeping bentgrass) protein is ATP synthase epsilon chain, chloroplastic.